The following is a 137-amino-acid chain: Glutamate mutase sigma subunit (137 aa).

A B12-binding domain is found at 3-137 (KKTIVLGVIG…ADLKKDLNIE (135 aa)). Residues 13–17 (SDCHA), H16, 61–63 (SSL), and 93–97 (NIVVG) each bind adenosylcob(III)alamin.

This sequence belongs to the methylaspartate mutase GlmS subunit family. Heterotetramer composed of 2 epsilon subunits (GlmE) and 2 sigma subunits (GlmS). GlmE exists as a homodimer and GlmS as a monomer. It depends on adenosylcob(III)alamin as a cofactor.

The enzyme catalyses (2S,3S)-3-methyl-L-aspartate = L-glutamate. It participates in amino-acid degradation; L-glutamate degradation via mesaconate pathway; acetate and pyruvate from L-glutamate: step 1/4. With respect to regulation, competitively inhibited by (2S,4S)-4-fluoroglutamate, 2-methyleneglutarate, (2R,3RS)-3-fluoroglutamate and (S)-3-methylitaconate. Functionally, catalyzes the carbon skeleton rearrangement of L-glutamate to L-threo-3-methylaspartate ((2S,3S)-3-methylaspartate). The chain is Glutamate mutase sigma subunit from Clostridium cochlearium.